A 476-amino-acid polypeptide reads, in one-letter code: E3 SUMO-protein ligase EGR2 (476 aa).

Residues 127–141 (PASTTASSSVTSASP) show a composition bias toward low complexity. Residues 127–178 (PASTTASSSVTSASPNPLATGPLGVCTMSQTQPDLDHLYSPPPPPPPYSGCA) are disordered. The HCFC1-binding-motif (HBM) motif lies at 162-165 (DHLY). Lys-247 bears the N6-acetyllysine; by EP300 mark. Disordered stretches follow at residues 275–300 (GPSA…SSSA) and 318–341 (RPIL…RPYP). Over residues 281–290 (TGPGASGGSE) the composition is skewed to gly residues. 3 C2H2-type zinc fingers span residues 340 to 364 (YPCP…IRIH), 370 to 392 (FQCR…IRTH), and 398 to 420 (FACD…TKIH). A disordered region spans residues 412–476 (ERKRHTKIHL…APCSSRTRTP (65 aa)). The span at 415 to 425 (RHTKIHLRQKE) shows a compositional bias: basic residues. Low complexity predominate over residues 429-476 (SAPSASVPAPSTASCSGGVQPGGTLCSSNSSSLGGGPLAPCSSRTRTP).

It belongs to the EGR C2H2-type zinc-finger protein family. Interacts with HCFC1. Interacts with WWP2. Interacts with UBC9. Interacts with CITED1. Interacts (via phosphorylated form) with SFN. Post-translationally, ubiquitinated by WWP2 leading to proteasomal degradation. In terms of processing, acetylated at Lys-247. May be deacetylated by HDAC6, HDAC10 or SIRT1.

The protein localises to the nucleus. It participates in protein modification; protein sumoylation. Sequence-specific DNA-binding transcription factor. Plays a role in hindbrain segmentation by regulating the expression of a subset of homeobox containing genes and in Schwann cell myelination by regulating the expression of genes involved in the formation and maintenance of myelin. Binds to two EGR2-consensus sites EGR2A (5'-CTGTAGGAG-3') and EGR2B (5'-ATGTAGGTG-3') in the HOXB3 enhancer and promotes HOXB3 transcriptional activation. Binds to specific DNA sites located in the promoter region of HOXA4, HOXB2 and ERBB2. Regulates hindbrain segmentation by controlling the expression of Hox genes, such as HOXA4, HOXB3 and HOXB2, and thereby specifying odd and even rhombomeres. Promotes the expression of HOXB3 in the rhombomere r5 in the hindbrain. Regulates myelination in the peripheral nervous system after birth, possibly by regulating the expression of myelin proteins, such as MPZ, and by promoting the differentiation of Schwann cells. Involved in the development of the jaw openener musculature, probably by playing a role in its innervation through trigeminal motor neurons. May play a role in adipogenesis, possibly by regulating the expression of CEBPB. In terms of biological role, E3 SUMO-protein ligase helping SUMO1 conjugation to its coregulators NAB1 and NAB2, whose sumoylation down-regulates EGR2 transcriptional activity. In Homo sapiens (Human), this protein is E3 SUMO-protein ligase EGR2 (EGR2).